Here is a 720-residue protein sequence, read N- to C-terminus: Phosphoribosylformylglycinamidine synthase subunit PurL (720 aa).

The active site involves histidine 34. Tyrosine 37 provides a ligand contact to ATP. Glutamate 83 serves as a coordination point for Mg(2+). Residues 84–87 (SHNH) and arginine 106 each bind substrate. Histidine 85 functions as the Proton acceptor in the catalytic mechanism. Aspartate 107 is a binding site for Mg(2+). Glutamine 231 contributes to the substrate binding site. Mg(2+) is bound at residue aspartate 259. Substrate is bound at residue 303 to 305 (ESQ). Residues aspartate 480 and glycine 517 each contribute to the ATP site. Position 518 (asparagine 518) interacts with Mg(2+). Serine 520 is a substrate binding site.

The protein belongs to the FGAMS family. In terms of assembly, monomer. Part of the FGAM synthase complex composed of 1 PurL, 1 PurQ and 2 PurS subunits.

Its subcellular location is the cytoplasm. The enzyme catalyses N(2)-formyl-N(1)-(5-phospho-beta-D-ribosyl)glycinamide + L-glutamine + ATP + H2O = 2-formamido-N(1)-(5-O-phospho-beta-D-ribosyl)acetamidine + L-glutamate + ADP + phosphate + H(+). It participates in purine metabolism; IMP biosynthesis via de novo pathway; 5-amino-1-(5-phospho-D-ribosyl)imidazole from N(2)-formyl-N(1)-(5-phospho-D-ribosyl)glycinamide: step 1/2. Part of the phosphoribosylformylglycinamidine synthase complex involved in the purines biosynthetic pathway. Catalyzes the ATP-dependent conversion of formylglycinamide ribonucleotide (FGAR) and glutamine to yield formylglycinamidine ribonucleotide (FGAM) and glutamate. The FGAM synthase complex is composed of three subunits. PurQ produces an ammonia molecule by converting glutamine to glutamate. PurL transfers the ammonia molecule to FGAR to form FGAM in an ATP-dependent manner. PurS interacts with PurQ and PurL and is thought to assist in the transfer of the ammonia molecule from PurQ to PurL. In Haloarcula marismortui (strain ATCC 43049 / DSM 3752 / JCM 8966 / VKM B-1809) (Halobacterium marismortui), this protein is Phosphoribosylformylglycinamidine synthase subunit PurL.